Consider the following 85-residue polypeptide: Small ribosomal subunit protein uS17 (85 aa).

The protein belongs to the universal ribosomal protein uS17 family. In terms of assembly, part of the 30S ribosomal subunit.

Its function is as follows. One of the primary rRNA binding proteins, it binds specifically to the 5'-end of 16S ribosomal RNA. This chain is Small ribosomal subunit protein uS17, found in Mesoplasma florum (strain ATCC 33453 / NBRC 100688 / NCTC 11704 / L1) (Acholeplasma florum).